A 498-amino-acid polypeptide reads, in one-letter code: Capsanthin/capsorubin synthase, chromoplastic (498 aa).

The transit peptide at 1–52 (METLLKPFPSPLLSIPTPNMYSFKHNSTFPNPTKQKDSRKFHYRNKSSTHFC) directs the protein to the chromoplast. Position 84 to 112 (84 to 112 (VIIIGTGPAGLRLAEQVSKYGIKVCCVDP)) interacts with NAD(+). Residues 293–297 (FLEET) carry the FLEET motif motif.

The protein belongs to the lycopene cyclase family. Monomer. FAD serves as cofactor. NADPH is required as a cofactor.

It localises to the plastid. It is found in the chromoplast. It carries out the reaction all-trans-violaxanthin = all-trans-capsorubin. It catalyses the reaction all-trans-antheraxanthin = all-trans-capsanthin. The enzyme catalyses all-trans-violaxanthin = (5R,6S)-5,6-epoxi-capsanthin. The catalysed reaction is (5R,6S)-5,6-epoxi-capsanthin = all-trans-capsorubin. It functions in the pathway carotenoid biosynthesis; capsanthin biosynthesis; capsanthin from antheraxanthin: step 1/1. The protein operates within carotenoid biosynthesis; capsorubin biosynthesis; capsorubin from violaxanthin: step 1/1. Its function is as follows. Catalyzes the conversion of the ubiquitous 5,6-epoxycarotenoids, antheraxanthin and violaxanthin, into capsanthin and capsorubin, respectively. The sequence is that of Capsanthin/capsorubin synthase, chromoplastic from Capsicum annuum (Capsicum pepper).